Here is a 319-residue protein sequence, read N- to C-terminus: Inactive hydroxysteroid dehydrogenase-like protein 1 (319 aa).

The interval 2 to 82 (AAVDSFQLLY…CGASEAIAKA (81 aa)) is required for mitochondria translocation. NADP(+) contacts are provided by residues 74 to 80 (GASEAIA), lysine 99, and aspartate 125.

This sequence belongs to the short-chain dehydrogenases/reductases (SDR) family. 17-beta-HSD 3 subfamily.

The protein resides in the mitochondrion. The sequence is that of Inactive hydroxysteroid dehydrogenase-like protein 1 (hsdl1) from Danio rerio (Zebrafish).